Consider the following 130-residue polypeptide: Protein NrdI (130 aa).

Belongs to the NrdI family.

Its function is as follows. Probably involved in ribonucleotide reductase function. This is Protein NrdI from Staphylococcus carnosus (strain TM300).